The sequence spans 394 residues: 1-deoxy-D-xylulose 5-phosphate reductoisomerase (394 aa).

Positions 12, 13, 14, 15, 39, 40, and 126 each coordinate NADPH. Residue lysine 127 participates in 1-deoxy-D-xylulose 5-phosphate binding. NADPH is bound at residue glutamate 128. Aspartate 152 is a Mn(2+) binding site. 4 residues coordinate 1-deoxy-D-xylulose 5-phosphate: serine 153, glutamate 154, serine 183, and histidine 206. Residue glutamate 154 participates in Mn(2+) binding. Residue glycine 212 participates in NADPH binding. 1-deoxy-D-xylulose 5-phosphate-binding residues include serine 219, asparagine 224, lysine 225, and glutamate 228. Glutamate 228 serves as a coordination point for Mn(2+).

Belongs to the DXR family. Mg(2+) serves as cofactor. Requires Mn(2+) as cofactor.

The enzyme catalyses 2-C-methyl-D-erythritol 4-phosphate + NADP(+) = 1-deoxy-D-xylulose 5-phosphate + NADPH + H(+). The protein operates within isoprenoid biosynthesis; isopentenyl diphosphate biosynthesis via DXP pathway; isopentenyl diphosphate from 1-deoxy-D-xylulose 5-phosphate: step 1/6. In terms of biological role, catalyzes the NADPH-dependent rearrangement and reduction of 1-deoxy-D-xylulose-5-phosphate (DXP) to 2-C-methyl-D-erythritol 4-phosphate (MEP). This Neisseria gonorrhoeae (strain ATCC 700825 / FA 1090) protein is 1-deoxy-D-xylulose 5-phosphate reductoisomerase.